The sequence spans 469 residues: Ribulose bisphosphate carboxylase large chain (469 aa).

An N6,N6,N6-trimethyllysine modification is found at Lys8. Substrate is bound by residues Asn117 and Thr167. The active-site Proton acceptor is the Lys169. Lys171 provides a ligand contact to substrate. 3 residues coordinate Mg(2+): Lys195, Asp197, and Glu198. N6-carboxylysine is present on Lys195. The active-site Proton acceptor is the His288. Substrate-binding residues include Arg289, His321, and Ser373.

It belongs to the RuBisCO large chain family. Type I subfamily. In terms of assembly, heterohexadecamer of 8 large chains and 8 small chains; disulfide-linked. The disulfide link is formed within the large subunit homodimers. Mg(2+) serves as cofactor. The disulfide bond which can form in the large chain dimeric partners within the hexadecamer appears to be associated with oxidative stress and protein turnover.

It localises to the plastid. The protein resides in the chloroplast. It carries out the reaction 2 (2R)-3-phosphoglycerate + 2 H(+) = D-ribulose 1,5-bisphosphate + CO2 + H2O. It catalyses the reaction D-ribulose 1,5-bisphosphate + O2 = 2-phosphoglycolate + (2R)-3-phosphoglycerate + 2 H(+). RuBisCO catalyzes two reactions: the carboxylation of D-ribulose 1,5-bisphosphate, the primary event in carbon dioxide fixation, as well as the oxidative fragmentation of the pentose substrate in the photorespiration process. Both reactions occur simultaneously and in competition at the same active site. The protein is Ribulose bisphosphate carboxylase large chain of Persicaria senticosa (Knotweed).